A 133-amino-acid chain; its full sequence is ATP synthase epsilon chain (133 aa).

A disordered region spans residues 81-110; the sequence is AAERPEQIDTERARKAKERAEQRLASEHVD.

It belongs to the ATPase epsilon chain family. In terms of assembly, F-type ATPases have 2 components, CF(1) - the catalytic core - and CF(0) - the membrane proton channel. CF(1) has five subunits: alpha(3), beta(3), gamma(1), delta(1), epsilon(1). CF(0) has three main subunits: a, b and c.

Its subcellular location is the cell membrane. Its function is as follows. Produces ATP from ADP in the presence of a proton gradient across the membrane. The polypeptide is ATP synthase epsilon chain (Shouchella clausii (strain KSM-K16) (Alkalihalobacillus clausii)).